Here is a 185-residue protein sequence, read N- to C-terminus: MTLPGPEAPGLSEALALIADVPDFPQPGILFKDITPLLAEHAALEAVVAALAAPGRDQTGAPVVDKVLGMESRGFILGAPVALALGVGFVPVRKAGKLPRATYAVSYALEYGEATLEVHQDALEPGDRVLLVDDVLATGGTARATIDLVEKCGASVHAVAILMELGFLPGREALGTVPLTTLLTV.

Belongs to the purine/pyrimidine phosphoribosyltransferase family. As to quaternary structure, homodimer.

The protein resides in the cytoplasm. The catalysed reaction is AMP + diphosphate = 5-phospho-alpha-D-ribose 1-diphosphate + adenine. It participates in purine metabolism; AMP biosynthesis via salvage pathway; AMP from adenine: step 1/1. Catalyzes a salvage reaction resulting in the formation of AMP, that is energically less costly than de novo synthesis. The sequence is that of Adenine phosphoribosyltransferase from Nocardioides sp. (strain ATCC BAA-499 / JS614).